We begin with the raw amino-acid sequence, 610 residues long: UvrABC system protein C (610 aa).

Positions 16–94 (SQPGVYRMYD…IKLYQPRYNV (79 aa)) constitute a GIY-YIG domain. In terms of domain architecture, UVR spans 204 to 239 (QQVLTQLISRMEEASRLLHFEDAARIRDQIQAVRRV).

The protein belongs to the UvrC family. As to quaternary structure, interacts with UvrB in an incision complex.

The protein resides in the cytoplasm. Functionally, the UvrABC repair system catalyzes the recognition and processing of DNA lesions. UvrC both incises the 5' and 3' sides of the lesion. The N-terminal half is responsible for the 3' incision and the C-terminal half is responsible for the 5' incision. The polypeptide is UvrABC system protein C (Yersinia enterocolitica serotype O:8 / biotype 1B (strain NCTC 13174 / 8081)).